A 469-amino-acid polypeptide reads, in one-letter code: 3-isopropylmalate dehydratase large subunit (469 aa).

[4Fe-4S] cluster-binding residues include cysteine 350, cysteine 410, and cysteine 413.

This sequence belongs to the aconitase/IPM isomerase family. LeuC type 1 subfamily. In terms of assembly, heterodimer of LeuC and LeuD. [4Fe-4S] cluster serves as cofactor.

The enzyme catalyses (2R,3S)-3-isopropylmalate = (2S)-2-isopropylmalate. The protein operates within amino-acid biosynthesis; L-leucine biosynthesis; L-leucine from 3-methyl-2-oxobutanoate: step 2/4. Its function is as follows. Catalyzes the isomerization between 2-isopropylmalate and 3-isopropylmalate, via the formation of 2-isopropylmaleate. The chain is 3-isopropylmalate dehydratase large subunit from Chelativorans sp. (strain BNC1).